A 427-amino-acid polypeptide reads, in one-letter code: Glutamate-1-semialdehyde 2,1-aminomutase (427 aa).

An N6-(pyridoxal phosphate)lysine modification is found at lysine 265.

This sequence belongs to the class-III pyridoxal-phosphate-dependent aminotransferase family. HemL subfamily. As to quaternary structure, homodimer. Pyridoxal 5'-phosphate serves as cofactor.

Its subcellular location is the cytoplasm. The catalysed reaction is (S)-4-amino-5-oxopentanoate = 5-aminolevulinate. It functions in the pathway porphyrin-containing compound metabolism; protoporphyrin-IX biosynthesis; 5-aminolevulinate from L-glutamyl-tRNA(Glu): step 2/2. The protein is Glutamate-1-semialdehyde 2,1-aminomutase of Burkholderia mallei (strain NCTC 10229).